Here is a 664-residue protein sequence, read N- to C-terminus: Cyclic nucleotide-gated channel alpha-2 (664 aa).

The span at 1–10 shows a compositional bias: polar residues; sequence MMTEKSNGVK. The disordered stretch occupies residues 1 to 51; it reads MMTEKSNGVKSSPANNHNHHPPPSIKANGKDDHRAGSRPQSVAADDDTSPE. Over 1 to 146 the chain is Cytoplasmic; the sequence is MMTEKSNGVK…PAGDWYYRWL (146 aa). The chain crosses the membrane as a helical span at residues 147-168; sequence FVIAMPVLYNWCLLVARACFSD. The Extracellular segment spans residues 169 to 178; that stretch reads LQRNYFVVWL. A helical membrane pass occupies residues 179 to 199; it reads VLDYFSDTVYIADLIIRLRTG. Residues 200 to 224 lie on the Cytoplasmic side of the membrane; that stretch reads FLEQGLLVKDPKKLRDNYIHTLQFK. The helical transmembrane segment at 225 to 243 threads the bilayer; the sequence is LDVASIIPTDLIYFAVGIH. The Extracellular portion of the chain corresponds to 244-248; that stretch reads SPEVR. A helical membrane pass occupies residues 249-267; the sequence is FNRLLHFARMFEFFDRTET. The Cytoplasmic portion of the chain corresponds to 268-274; the sequence is RTSYPNI. The tract at residues 272 to 380 is ion conduction pathway; sequence PNIFRISNLV…GNVGSMISNM (109 aa). A helical membrane pass occupies residues 275–298; that stretch reads FRISNLVLYILVIIHWNACIYYVI. At 299-321 the chain is on the extracellular side; that stretch reads SKSIGFGVDTWVYPNITDPEYGY. Transmembrane regions (helical) follow at residues 322-356 and 357-381; these read LARE…LFVI and FDFL…SNMN. The selectivity filter stretch occupies residues 339 to 342; sequence TIGE. The interval 382-458 is C-linker; that stretch reads ATRAEFQAKI…STLKKVRIFQ (77 aa). At 382 to 664 the chain is on the cytoplasmic side; it reads ATRAEFQAKI…INTPEPTAAE (283 aa). The cyclic nucleotide-binding domain stretch occupies residues 462–582; sequence AGLLVELVLK…EERGREILMK (121 aa). 4 residues coordinate 3',5'-cyclic GMP: Gly-522, Ser-525, Arg-538, and Thr-539. Residues Arg-538 and Thr-539 each coordinate 3',5'-cyclic AMP. A coiled-coil region spans residues 599-653; that stretch reads VQEKLEQLETNMDTLYTRFARLLAEYTGAQQKLKQRITVLETKMKQNHEDDYLSD.

It belongs to the cyclic nucleotide-gated cation channel (TC 1.A.1.5) family. CNGA2 subfamily. In terms of assembly, the olfactory cyclic nucleotide-gated channel is an heterotetramer composed of CNGA2, CNGA4 and CNGB1b subunits with 2:1:1 stoichiometry. As to expression, olfactory neurons. Widely expressed in brain, enriched in deep cerebellar nuclei, olfactory bulb mitral cells and cerebellar Purkinje neurons. Expressed in olfactory sensory cilia (at protein level).

It localises to the cell projection. The protein resides in the cilium membrane. The enzyme catalyses Ca(2+)(in) = Ca(2+)(out). It catalyses the reaction Na(+)(in) = Na(+)(out). It carries out the reaction K(+)(in) = K(+)(out). The catalysed reaction is NH4(+)(in) = NH4(+)(out). The enzyme catalyses Rb(+)(in) = Rb(+)(out). It catalyses the reaction Li(+)(in) = Li(+)(out). It carries out the reaction Cs(+)(in) = Cs(+)(out). With respect to regulation, the channel activity is inhibited by L-cis diltiazem. Functionally, pore-forming subunit of the olfactory cyclic nucleotide-gated channel. Operates in the cilia of olfactory sensory neurons where chemical stimulation of the odorant is converted to an electrical signal. Mediates odorant-induced cAMP-dependent Ca(2+) influx triggering neuron depolarization. The rise of intracellular Ca(2+) levels potentiates the olfactory response by activating Ca(2+)-dependent Cl(-) channels, but it also serves as a negative feedback signal to desensitize the channel for rapid adaptation to odorants. Conducts cAMP- and cGMP-gated ion currents, with permeability for monovalent and divalent cations. The sequence is that of Cyclic nucleotide-gated channel alpha-2 from Rattus norvegicus (Rat).